A 137-amino-acid chain; its full sequence is Large-conductance mechanosensitive channel (137 aa).

Helical transmembrane passes span 10-30 and 76-96; these read FAMRGNVVDLAVGVIIGAAFG and GVFIQNVFDFIIVAFAIFMAI.

The protein belongs to the MscL family. In terms of assembly, homopentamer.

The protein resides in the cell inner membrane. In terms of biological role, channel that opens in response to stretch forces in the membrane lipid bilayer. May participate in the regulation of osmotic pressure changes within the cell. This chain is Large-conductance mechanosensitive channel, found in Klebsiella pneumoniae subsp. pneumoniae (strain ATCC 700721 / MGH 78578).